A 279-amino-acid chain; its full sequence is uncharacterized protein (279 aa).

Disordered stretches follow at residues 50–109 and 249–279; these read YTYN…YNKN and SQSQPSSFSSSSSSSSIQLSPSPSSSSSPKL. Over residues 68–109 the composition is skewed to low complexity; it reads NNNSNYNNNNNNNNNNNNNNNNNNNNNNNKNNNNNNYNYNKN.

This is an uncharacterized protein from Dictyostelium discoideum (Social amoeba).